The primary structure comprises 498 residues: ATP synthase subunit alpha 1 (498 aa).

This sequence belongs to the ATPase alpha/beta chains family. As to quaternary structure, F-type ATPases have 2 components, CF(1) - the catalytic core - and CF(0) - the membrane proton channel. CF(1) has five subunits: alpha(3), beta(3), gamma(1), delta(1), epsilon(1). CF(0) has three main subunits: a(1), b(2) and c(9-12). The alpha and beta chains form an alternating ring which encloses part of the gamma chain. CF(1) is attached to CF(0) by a central stalk formed by the gamma and epsilon chains, while a peripheral stalk is formed by the delta and b chains.

It is found in the cell membrane. The catalysed reaction is ATP + H2O + 4 H(+)(in) = ADP + phosphate + 5 H(+)(out). Functionally, produces ATP from ADP in the presence of a proton gradient across the membrane. The alpha chain is a regulatory subunit. In Listeria monocytogenes serovar 1/2a (strain ATCC BAA-679 / EGD-e), this protein is ATP synthase subunit alpha 1.